The primary structure comprises 246 residues: Octanoyltransferase (246 aa).

The region spanning 30 to 227 is the BPL/LPL catalytic domain; it reads GRIGNTLLLL…QFGRVFGHQV (198 aa). Substrate contacts are provided by residues 75–82, 155–157, and 168–170; these read RGGDVTYH, AIG, and GFA. The Acyl-thioester intermediate role is filled by Cys-186.

This sequence belongs to the LipB family.

The protein resides in the cytoplasm. The catalysed reaction is octanoyl-[ACP] + L-lysyl-[protein] = N(6)-octanoyl-L-lysyl-[protein] + holo-[ACP] + H(+). The protein operates within protein modification; protein lipoylation via endogenous pathway; protein N(6)-(lipoyl)lysine from octanoyl-[acyl-carrier-protein]: step 1/2. Functionally, catalyzes the transfer of endogenously produced octanoic acid from octanoyl-acyl-carrier-protein onto the lipoyl domains of lipoate-dependent enzymes. Lipoyl-ACP can also act as a substrate although octanoyl-ACP is likely to be the physiological substrate. This chain is Octanoyltransferase, found in Acidobacterium capsulatum (strain ATCC 51196 / DSM 11244 / BCRC 80197 / JCM 7670 / NBRC 15755 / NCIMB 13165 / 161).